Consider the following 585-residue polypeptide: Probable G-protein coupled receptor Mth-like 10 (585 aa).

Residues 1–32 form the signal peptide; the sequence is MPKKIHQPGGSLYCGVTLLGVLCLVVFRLIPG. The Extracellular portion of the chain corresponds to 33–250; the sequence is IPFGTYVMAE…DHSTVKIINS (218 aa). 5 disulfides stabilise this stretch: Cys-56–Cys-110, Cys-112–Cys-117, Cys-121–Cys-216, Cys-122–Cys-135, and Cys-177–Cys-236. Asn-63 and Asn-72 each carry an N-linked (GlcNAc...) asparagine glycan. N-linked (GlcNAc...) asparagine glycosylation is found at Asn-142, Asn-152, Asn-157, Asn-198, and Asn-223. The chain crosses the membrane as a helical span at residues 251 to 271; the sequence is YAMMFSIPFMMLTIAVYLLIP. At 272-280 the chain is on the cytoplasmic side; it reads ELRNQHGKS. Residues 281 to 301 form a helical membrane-spanning segment; the sequence is LVCYLIGLSVGYSSLCYVQLY. Over 302–312 the chain is Extracellular; the sequence is QVDATGVTCKV. Residues 313-333 traverse the membrane as a helical segment; sequence FGYTAYFFFMGAYMWLSVISF. At 334-353 the chain is on the cytoplasmic side; the sequence is DLWHNFRGTRGINRFQEKKR. The chain crosses the membrane as a helical span at residues 354 to 374; sequence FLFYSLYSWGIALVFLAFTYC. Residues 375-404 are Extracellular-facing; it reads AQQLTNLPANLKPGIGDGVYCWLDMSNWAA. A helical membrane pass occupies residues 405 to 425; that stretch reads MIYFYGPILAIVVANTIMFIM. Residues 426-466 lie on the Cytoplasmic side of the membrane; that stretch reads TAIKIHGVQREMARIIASENSTKNLRTEKDKRFYRAWSNYR. The helical transmembrane segment at 467-487 threads the bilayer; it reads FGLFLRLFLIMGITWLTELIS. Residues 488–498 lie on the Extracellular side of the membrane; the sequence is YFVGSDKGWSK. Residues 499-519 traverse the membrane as a helical segment; it reads LFYISDLANAMQGFLIFMLFV. At 520 to 585 the chain is on the cytoplasmic side; sequence MKKKVKHLIT…VDPQKTTIFR (66 aa).

It belongs to the G-protein coupled receptor 2 family. Mth subfamily.

Its subcellular location is the cell membrane. The sequence is that of Probable G-protein coupled receptor Mth-like 10 (mthl10) from Drosophila melanogaster (Fruit fly).